A 371-amino-acid polypeptide reads, in one-letter code: Putative glutamate--cysteine ligase 2 (371 aa).

This sequence belongs to the glutamate--cysteine ligase type 2 family. YbdK subfamily.

It catalyses the reaction L-cysteine + L-glutamate + ATP = gamma-L-glutamyl-L-cysteine + ADP + phosphate + H(+). Functionally, ATP-dependent carboxylate-amine ligase which exhibits weak glutamate--cysteine ligase activity. The sequence is that of Putative glutamate--cysteine ligase 2 from Cupriavidus pinatubonensis (strain JMP 134 / LMG 1197) (Cupriavidus necator (strain JMP 134)).